Consider the following 1598-residue polypeptide: Transposon Ty2-LR2 Gag-Pol polyprotein (1598 aa).

Composition is skewed to polar residues over residues 1-11 (MESQQLHQNPH), 19-39 (ASVT…SASN), and 49-60 (KVNSQEETTPGT). 2 disordered regions span residues 1–88 (MESQ…YQQH) and 359–449 (QHSE…SNDE). Positions 295–397 (ENNINVSDRL…SSKPRAAKAH (103 aa)) are RNA-binding. The segment covering 369 to 381 (TSPNTTNTKVTTR) has biased composition (low complexity). Polar residues-rich tracts occupy residues 399-408 (IATSSKFSRV) and 415-435 (ESTV…GQQQ). Aspartate 457 functions as the For protease activity; shared with dimeric partner in the catalytic mechanism. The tract at residues 579-636 (NVNKSKSVNKYPYPLIHRMLGHANFRSIQKSLKKNAVTYLKESDIEWSNASTYQCPDC) is integrase-type zinc finger-like. Positions 656–831 (ESYEPFQYLH…AGLDITTILP (176 aa)) constitute an Integrase catalytic domain. The Mg(2+) site is built by aspartate 667 and aspartate 732. Composition is skewed to polar residues over residues 915-927 (SFIE…QSYD), 1009-1034 (ESDT…STNE), and 1065-1082 (QRNS…STPS). 5 disordered regions span residues 915-934 (SFIE…ESDH), 1004-1034 (MGGT…STNE), 1059-1135 (TEEP…KSSK), 1146-1165 (LPLP…VSKD), and 1170-1205 (HSRQ…TEIE). Residues 1151-1165 (LTHKSPTDTSDVSKD) show a composition bias toward basic and acidic residues. The Bipartite nuclear localization signal motif lies at 1193-1227 (KKRSLEDNETEIEVSRDTWNNKNMRSLEPPRSKKR). In terms of domain architecture, Reverse transcriptase Ty1/copia-type spans 1353–1491 (NDYYITQLDI…DILGLEIKYQ (139 aa)). Mg(2+)-binding residues include aspartate 1361, aspartate 1442, and aspartate 1443.

As to quaternary structure, the capsid protein forms a homotrimer, from which the VLPs are assembled. The protease is a homodimer, whose active site consists of two apposed aspartic acid residues. In terms of processing, initially, virus-like particles (VLPs) are composed of the structural unprocessed proteins Gag and Gag-Pol, and also contain the host initiator methionine tRNA (tRNA(i)-Met) which serves as a primer for minus-strand DNA synthesis, and a dimer of genomic Ty RNA. Processing of the polyproteins occurs within the particle and proceeds by an ordered pathway, called maturation. First, the protease (PR) is released by autocatalytic cleavage of the Gag-Pol polyprotein, and this cleavage is a prerequisite for subsequent processing at the remaining sites to release the mature structural and catalytic proteins. Maturation takes place prior to the RT reaction and is required to produce transposition-competent VLPs.

Its subcellular location is the cytoplasm. The protein localises to the nucleus. The catalysed reaction is DNA(n) + a 2'-deoxyribonucleoside 5'-triphosphate = DNA(n+1) + diphosphate. It catalyses the reaction Endonucleolytic cleavage to 5'-phosphomonoester.. Functionally, capsid protein (CA) is the structural component of the virus-like particle (VLP), forming the shell that encapsulates the retrotransposons dimeric RNA genome. The particles are assembled from trimer-clustered units and there are holes in the capsid shells that allow for the diffusion of macromolecules. CA also has nucleocapsid-like chaperone activity, promoting primer tRNA(i)-Met annealing to the multipartite primer-binding site (PBS), dimerization of Ty2 RNA and initiation of reverse transcription. In terms of biological role, the aspartyl protease (PR) mediates the proteolytic cleavages of the Gag and Gag-Pol polyproteins after assembly of the VLP. Its function is as follows. Reverse transcriptase/ribonuclease H (RT) is a multifunctional enzyme that catalyzes the conversion of the retro-elements RNA genome into dsDNA within the VLP. The enzyme displays a DNA polymerase activity that can copy either DNA or RNA templates, and a ribonuclease H (RNase H) activity that cleaves the RNA strand of RNA-DNA heteroduplexes during plus-strand synthesis and hydrolyzes RNA primers. The conversion leads to a linear dsDNA copy of the retrotransposon that includes long terminal repeats (LTRs) at both ends. Integrase (IN) targets the VLP to the nucleus, where a subparticle preintegration complex (PIC) containing at least integrase and the newly synthesized dsDNA copy of the retrotransposon must transit the nuclear membrane. Once in the nucleus, integrase performs the integration of the dsDNA into the host genome. This is Transposon Ty2-LR2 Gag-Pol polyprotein (TY2B-LR2) from Saccharomyces cerevisiae (strain ATCC 204508 / S288c) (Baker's yeast).